Consider the following 231-residue polypeptide: Putative Nudix hydrolase FPV054 (231 aa).

Residues Ser74–Phe217 enclose the Nudix hydrolase domain. Positions Gly125–Asp146 match the Nudix box motif. Glu131 is a Mg(2+) binding site. Glu140 serves as the catalytic Nucleophile. Mg(2+)-binding residues include Glu144 and Asp165.

The protein belongs to the Nudix hydrolase family. Mg(2+) is required as a cofactor. The cofactor is Mn(2+).

Functionally, decapping enzyme required for the removal of the 5'-end m7GpppN cap tethered to viral and host mRNAs to allow their decay in cells. May therefore accelerate viral and cellular mRNA turnover to eliminate competing host mRNAs and allow stage-specific synthesis of viral proteins. Acceleration of the turnover of cellular transcripts may even promote the shutoff of host protein synthesis. Does not cleave unmethylated RNAs or RNAs shorter than 24 nucleotides. This Vertebrata (FPV) protein is Putative Nudix hydrolase FPV054.